The sequence spans 374 residues: DNA primase small subunit PriS (374 aa).

Catalysis depends on residues D99, D101, and D281.

Belongs to the eukaryotic-type primase small subunit family. In terms of assembly, heterodimer of a small subunit (PriS) and a large subunit (PriL). Mg(2+) is required as a cofactor. It depends on Mn(2+) as a cofactor.

Its function is as follows. Catalytic subunit of DNA primase, an RNA polymerase that catalyzes the synthesis of short RNA molecules used as primers for DNA polymerase during DNA replication. The small subunit contains the primase catalytic core and has DNA synthesis activity on its own. Binding to the large subunit stabilizes and modulates the activity, increasing the rate of DNA synthesis while decreasing the length of the DNA fragments, and conferring RNA synthesis capability. The DNA polymerase activity may enable DNA primase to also catalyze primer extension after primer synthesis. May also play a role in DNA repair. In Methanoregula boonei (strain DSM 21154 / JCM 14090 / 6A8), this protein is DNA primase small subunit PriS.